Consider the following 320-residue polypeptide: tRNA pseudouridine synthase B (320 aa).

Asp48 (nucleophile) is an active-site residue.

Belongs to the pseudouridine synthase TruB family. Type 1 subfamily.

The catalysed reaction is uridine(55) in tRNA = pseudouridine(55) in tRNA. Responsible for synthesis of pseudouridine from uracil-55 in the psi GC loop of transfer RNAs. This is tRNA pseudouridine synthase B from Mycobacterium leprae (strain TN).